We begin with the raw amino-acid sequence, 231 residues long: Chromosome partition protein MukE (231 aa).

Residues 204–231 are disordered; the sequence is TPEPSQQSLLENPTAEYDEEQTEWEDEA. Residues 219–231 show a composition bias toward acidic residues; it reads EYDEEQTEWEDEA.

This sequence belongs to the MukE family. In terms of assembly, interacts, and probably forms a ternary complex, with MukF and MukB. The complex formation is stimulated by calcium or magnesium.

The protein localises to the cytoplasm. It is found in the nucleoid. Functionally, involved in chromosome condensation, segregation and cell cycle progression. May participate in facilitating chromosome segregation by condensation DNA from both sides of a centrally located replisome during cell division. Probably acts via its interaction with MukB and MukF. In Vibrio cholerae serotype O1 (strain ATCC 39315 / El Tor Inaba N16961), this protein is Chromosome partition protein MukE.